The sequence spans 160 residues: Lipoprotein signal peptidase (160 aa).

3 helical membrane-spanning segments follow: residues 13 to 33 (IYITTIIFILILDISSKHLII), 72 to 92 (WFLSTVSILTILVMTRIITKL), and 104 to 124 (SLIIAGATGNLIDRIFYGFVV). Active-site residues include Asp125 and Asp143. A helical transmembrane segment spans residues 134–154 (WHFATFNIADCSIFIGIIILM).

This sequence belongs to the peptidase A8 family.

The protein resides in the cell inner membrane. It catalyses the reaction Release of signal peptides from bacterial membrane prolipoproteins. Hydrolyzes -Xaa-Yaa-Zaa-|-(S,diacylglyceryl)Cys-, in which Xaa is hydrophobic (preferably Leu), and Yaa (Ala or Ser) and Zaa (Gly or Ala) have small, neutral side chains.. Its pathway is protein modification; lipoprotein biosynthesis (signal peptide cleavage). In terms of biological role, this protein specifically catalyzes the removal of signal peptides from prolipoproteins. The chain is Lipoprotein signal peptidase from Buchnera aphidicola subsp. Acyrthosiphon pisum (strain Tuc7).